Here is a 349-residue protein sequence, read N- to C-terminus: MQVHIELKKVVDNSYDITIGTLPTLHFDTKVAVVTNSTISALHLEYLLSKISAKELYVVTLRDGEEYKNQQSIDTILEALFENRFNRKSMIIAFGGGVIGDMSGYAASIYQRGIDFIQIPTTLLSQVDASVGGKTGMNNRYGKNLVGAFHQPRAVYIDPHFLTTLPPREFGAGVAEIVKMAVTFDKDFFEFLERADLSKPEILQEAIKKALQTKAKVVTQDEKEQGIRAALNYGHTFGHVVENETAYKEFLHGEAVAIGMVMANEMAIKMNYMFEKEALRVKALLQKYNLPTTYAIKDVKAFYEAFFLDKKSSDSAITFILPLGIGDVVITDKVDTGTIMCVLNKFGKQ.

NAD(+) is bound by residues Asp-63–Lys-68, Gly-97–Asp-101, Thr-121–Thr-122, Lys-134, Lys-143, and Phe-161–Thr-164. Positions 176, 235, and 252 each coordinate Zn(2+).

The protein belongs to the sugar phosphate cyclases superfamily. Dehydroquinate synthase family. Requires Co(2+) as cofactor. Zn(2+) is required as a cofactor. The cofactor is NAD(+).

The protein resides in the cytoplasm. It carries out the reaction 7-phospho-2-dehydro-3-deoxy-D-arabino-heptonate = 3-dehydroquinate + phosphate. Its pathway is metabolic intermediate biosynthesis; chorismate biosynthesis; chorismate from D-erythrose 4-phosphate and phosphoenolpyruvate: step 2/7. Catalyzes the conversion of 3-deoxy-D-arabino-heptulosonate 7-phosphate (DAHP) to dehydroquinate (DHQ). This chain is 3-dehydroquinate synthase, found in Sulfurimonas denitrificans (strain ATCC 33889 / DSM 1251) (Thiomicrospira denitrificans (strain ATCC 33889 / DSM 1251)).